The chain runs to 501 residues: Aspartyl/glutamyl-tRNA(Asn/Gln) amidotransferase subunit B (501 aa).

Residues 271-299 form a disordered region; the sequence is VQETRHYQETDGSTSKGRPKETAEDYRYF. Residues 288-299 show a composition bias toward basic and acidic residues; that stretch reads RPKETAEDYRYF.

This sequence belongs to the GatB/GatE family. GatB subfamily. Heterotrimer of A, B and C subunits.

It carries out the reaction L-glutamyl-tRNA(Gln) + L-glutamine + ATP + H2O = L-glutaminyl-tRNA(Gln) + L-glutamate + ADP + phosphate + H(+). The enzyme catalyses L-aspartyl-tRNA(Asn) + L-glutamine + ATP + H2O = L-asparaginyl-tRNA(Asn) + L-glutamate + ADP + phosphate + 2 H(+). In terms of biological role, allows the formation of correctly charged Asn-tRNA(Asn) or Gln-tRNA(Gln) through the transamidation of misacylated Asp-tRNA(Asn) or Glu-tRNA(Gln) in organisms which lack either or both of asparaginyl-tRNA or glutaminyl-tRNA synthetases. The reaction takes place in the presence of glutamine and ATP through an activated phospho-Asp-tRNA(Asn) or phospho-Glu-tRNA(Gln). The polypeptide is Aspartyl/glutamyl-tRNA(Asn/Gln) amidotransferase subunit B (Corynebacterium diphtheriae (strain ATCC 700971 / NCTC 13129 / Biotype gravis)).